Reading from the N-terminus, the 1111-residue chain is NBPF family member NBPF9 (1111 aa).

A coiled-coil region spans residues 70 to 130; the sequence is MLRNERQFKE…RSLNEHLQAL (61 aa). The interval 161–198 is disordered; that stretch reads KLSPENDEDEDEDVQVEEDEKVLESSAPREVQKAEESK. Positions 165–181 are enriched in acidic residues; sequence ENDEDEDEDVQVEEDEK. In terms of domain architecture, Olduvai 1 spans 165 to 259; the sequence is ENDEDEDEDV…ECQDALNILP (95 aa). A coiled-coil region spans residues 341-401; sequence MLRNERQFKE…RSLNEHLQAL (61 aa). 8 Olduvai domains span residues 436 to 528, 529 to 600, 601 to 692, 695 to 750, 751 to 843, 844 to 919, 920 to 1012, and 1013 to 1111; these read ENDN…HIIP, ENES…VDIG, RHRW…PSCP, SREL…LDLD, RIKK…RSKK, KRRR…LDVD, and ERRR…IFPQ. 2 disordered regions span residues 451 to 474 and 510 to 569; these read EKVQ…PEDS and TLIG…STPS. Acidic residues-rich tracts occupy residues 530–539 and 550–562; these read NESDDEEEEE and ESEE…ESWD. 2 disordered regions span residues 829–871 and 999–1033; these read KKGK…LDEK and KGKG…PRLN. Basic residues-rich tracts occupy residues 831 to 849 and 1000 to 1018; these read GKGK…RRGR.

Belongs to the NBPF family. In terms of tissue distribution, expressed in a neuroblastoma cell line.

The protein resides in the cytoplasm. This Homo sapiens (Human) protein is NBPF family member NBPF9.